The following is a 612-amino-acid chain: Peroxisomal carnitine O-octanoyltransferase (612 aa).

At M1 the chain carries N-acetylmethionine. Residues K40 and K57 each carry the N6-succinyllysine modification. The active-site Proton acceptor is H327. CoA-binding positions include K406 and 410–417 (KEEALHPD). K406 is modified (N6-acetyllysine; alternate). Residue K406 is modified to N6-succinyllysine; alternate. (R)-carnitine is bound by residues Y439, T441, and T452. A Microbody targeting signal motif is present at residues 610-612 (AHL).

The protein belongs to the carnitine/choline acetyltransferase family.

The protein resides in the peroxisome. The enzyme catalyses octanoyl-CoA + (R)-carnitine = O-octanoyl-(R)-carnitine + CoA. The catalysed reaction is 4,8-dimethylnonanoyl-CoA + (R)-carnitine = O-4,8-dimethylnonanoyl-(R)-carnitine + CoA. The protein operates within lipid metabolism; fatty acid beta-oxidation. In terms of biological role, beta-oxidation of fatty acids. The highest activity concerns the C6 to C10 chain length substrate. In Mus musculus (Mouse), this protein is Peroxisomal carnitine O-octanoyltransferase (Crot).